A 160-amino-acid polypeptide reads, in one-letter code: Phosphopantetheine adenylyltransferase (160 aa).

Residue T10 coordinates substrate. Residues T10–F11 and H18 contribute to the ATP site. The substrate site is built by K42, L74, and R88. Residues G89–R91, E99, and N124–T130 each bind ATP.

The protein belongs to the bacterial CoaD family. As to quaternary structure, homohexamer. It depends on Mg(2+) as a cofactor.

Its subcellular location is the cytoplasm. The enzyme catalyses (R)-4'-phosphopantetheine + ATP + H(+) = 3'-dephospho-CoA + diphosphate. Its pathway is cofactor biosynthesis; coenzyme A biosynthesis; CoA from (R)-pantothenate: step 4/5. In terms of biological role, reversibly transfers an adenylyl group from ATP to 4'-phosphopantetheine, yielding dephospho-CoA (dPCoA) and pyrophosphate. This Shewanella piezotolerans (strain WP3 / JCM 13877) protein is Phosphopantetheine adenylyltransferase.